The following is a 417-amino-acid chain: MAEIKNYTLNFGPQHPAAHGVLRLVLELDGEVIQRADPHIGLLHRATEKLAEQKTYLQSVPYMDRLDYVSMMCNEHAYVMAIEKMLNIEVPLRAQYIRVMFDEITRILNHLMWLGAHALDVGAMGVFLYAFREREDLMDCYEAVSGARMHAAYYRPGGVYRDLPDTMPQHKASIIRNAKAISQLNENRQGSLLDFIEDFTNRFPTYVDEYETLLTDNRIWKQRLVGIGVVSPERAMAMGFTGAMLRGSGVEWDLRKKQPYEVYDLMDFDIPVGTNGDCYDRYLVRVEEMRQSNRIIKQCVEWLRNNAGPVMTDNHKVAPPSRVGMKSNMEDLIHHFKLFTEGFHVPTGEAYAAVEHPKGEFGVYLISDGANKPYRMKIRAPGFPHLQGLDEMAKGHMIADAVTIIGTQDIVFGEIDR.

Belongs to the complex I 49 kDa subunit family. NDH-1 is composed of 14 different subunits. Subunits NuoB, C, D, E, F, and G constitute the peripheral sector of the complex.

The protein resides in the cell inner membrane. The catalysed reaction is a quinone + NADH + 5 H(+)(in) = a quinol + NAD(+) + 4 H(+)(out). In terms of biological role, NDH-1 shuttles electrons from NADH, via FMN and iron-sulfur (Fe-S) centers, to quinones in the respiratory chain. The immediate electron acceptor for the enzyme in this species is believed to be ubiquinone. Couples the redox reaction to proton translocation (for every two electrons transferred, four hydrogen ions are translocated across the cytoplasmic membrane), and thus conserves the redox energy in a proton gradient. This Janthinobacterium sp. (strain Marseille) (Minibacterium massiliensis) protein is NADH-quinone oxidoreductase subunit D.